Reading from the N-terminus, the 20-residue chain is Protein PR-L3 (20 aa).

Belongs to the BetVI family.

The polypeptide is Protein PR-L3 (Lupinus luteus (European yellow lupine)).